Here is a 48-residue protein sequence, read N- to C-terminus: ATP synthase protein 8 (48 aa).

The helical transmembrane segment at 4–24 (LVPFFFVNQVVFAFIVLTVLI) threads the bilayer.

Belongs to the ATPase protein 8 family. As to quaternary structure, F-type ATPases have 2 components, CF(1) - the catalytic core - and CF(0) - the membrane proton channel.

It is found in the mitochondrion membrane. Its function is as follows. Mitochondrial membrane ATP synthase (F(1)F(0) ATP synthase or Complex V) produces ATP from ADP in the presence of a proton gradient across the membrane which is generated by electron transport complexes of the respiratory chain. F-type ATPases consist of two structural domains, F(1) - containing the extramembraneous catalytic core and F(0) - containing the membrane proton channel, linked together by a central stalk and a peripheral stalk. During catalysis, ATP synthesis in the catalytic domain of F(1) is coupled via a rotary mechanism of the central stalk subunits to proton translocation. Part of the complex F(0) domain. Minor subunit located with subunit a in the membrane. This is ATP synthase protein 8 (atp8) from Emericella nidulans (Aspergillus nidulans).